The following is a 527-amino-acid chain: Oviduct-specific glycoprotein (527 aa).

Positions 1–21 (MGKLLLWVGLVLVLKHHNGAA) are cleaved as a signal peptide. In terms of domain architecture, GH18 spans 22–385 (HKLVCYFANW…YMLNDLLLKA (364 aa)). Cys-26 and Cys-51 are disulfide-bonded. Asn-62 carries an N-linked (GlcNAc...) asparagine glycan. Residues 71 to 72 (AR), 98 to 101 (GGWN), Tyr-142, 211 to 214 (LSYD), and Trp-355 each bind chitin. Residues Asn-402 and Asn-441 are each glycosylated (N-linked (GlcNAc...) asparagine). The tract at residues 433–527 (TETHGRSDNM…MTLPSGKRSD (95 aa)) is disordered.

This sequence belongs to the glycosyl hydrolase 18 family. Oviduct.

Its subcellular location is the cytoplasmic vesicle. It localises to the secretory vesicle. In terms of biological role, binds to oocyte zona pellucida in vivo. May play a role in the fertilization process and/or early embryonic development. The sequence is that of Oviduct-specific glycoprotein (OVGP1) from Sus scrofa (Pig).